The primary structure comprises 111 residues: Probable 4-amino-4-deoxy-L-arabinose-phosphoundecaprenol flippase subunit ArnE (111 aa).

A run of 3 helical transmembrane segments spans residues 38 to 58 (LWLG…LLVL), 61 to 81 (LPVG…TLAA), and 91 to 111 (PRHW…GSAA). One can recognise an EamA domain in the interval 40-109 (LGLALICMGA…IISGIIILGS (70 aa)).

It belongs to the ArnE family. Heterodimer of ArnE and ArnF.

Its subcellular location is the cell inner membrane. It participates in bacterial outer membrane biogenesis; lipopolysaccharide biosynthesis. Functionally, translocates 4-amino-4-deoxy-L-arabinose-phosphoundecaprenol (alpha-L-Ara4N-phosphoundecaprenol) from the cytoplasmic to the periplasmic side of the inner membrane. This Salmonella paratyphi B (strain ATCC BAA-1250 / SPB7) protein is Probable 4-amino-4-deoxy-L-arabinose-phosphoundecaprenol flippase subunit ArnE.